Here is a 515-residue protein sequence, read N- to C-terminus: Bifunctional purine biosynthesis protein PurH (515 aa).

The region spanning 1 to 145 is the MGS-like domain; sequence MTKRALISVS…KNHASVTVVV (145 aa).

It belongs to the PurH family.

It carries out the reaction (6R)-10-formyltetrahydrofolate + 5-amino-1-(5-phospho-beta-D-ribosyl)imidazole-4-carboxamide = 5-formamido-1-(5-phospho-D-ribosyl)imidazole-4-carboxamide + (6S)-5,6,7,8-tetrahydrofolate. The enzyme catalyses IMP + H2O = 5-formamido-1-(5-phospho-D-ribosyl)imidazole-4-carboxamide. It functions in the pathway purine metabolism; IMP biosynthesis via de novo pathway; 5-formamido-1-(5-phospho-D-ribosyl)imidazole-4-carboxamide from 5-amino-1-(5-phospho-D-ribosyl)imidazole-4-carboxamide (10-formyl THF route): step 1/1. Its pathway is purine metabolism; IMP biosynthesis via de novo pathway; IMP from 5-formamido-1-(5-phospho-D-ribosyl)imidazole-4-carboxamide: step 1/1. This chain is Bifunctional purine biosynthesis protein PurH, found in Streptococcus equi subsp. zooepidemicus (strain H70).